Reading from the N-terminus, the 188-residue chain is Ribosome maturation factor RimM (188 aa).

The region spanning 93–175 (QDEFYFTDLI…EIEVQGDLSD (83 aa)) is the PRC barrel domain.

Belongs to the RimM family. Binds ribosomal protein uS19.

Its subcellular location is the cytoplasm. An accessory protein needed during the final step in the assembly of 30S ribosomal subunit, possibly for assembly of the head region. Essential for efficient processing of 16S rRNA. May be needed both before and after RbfA during the maturation of 16S rRNA. It has affinity for free ribosomal 30S subunits but not for 70S ribosomes. This chain is Ribosome maturation factor RimM, found in Gluconacetobacter diazotrophicus (strain ATCC 49037 / DSM 5601 / CCUG 37298 / CIP 103539 / LMG 7603 / PAl5).